The sequence spans 96 residues: Co-chaperonin GroES (96 aa).

It belongs to the GroES chaperonin family. In terms of assembly, heptamer of 7 subunits arranged in a ring. Interacts with the chaperonin GroEL.

It is found in the cytoplasm. Functionally, together with the chaperonin GroEL, plays an essential role in assisting protein folding. The GroEL-GroES system forms a nano-cage that allows encapsulation of the non-native substrate proteins and provides a physical environment optimized to promote and accelerate protein folding. GroES binds to the apical surface of the GroEL ring, thereby capping the opening of the GroEL channel. This Streptococcus pyogenes serotype M18 (strain MGAS8232) protein is Co-chaperonin GroES.